The chain runs to 438 residues: Xylose isomerase (438 aa).

Active-site residues include H100 and D103. Residues E231, E267, H270, D295, D306, D308, and D338 each coordinate Mg(2+).

Belongs to the xylose isomerase family. In terms of assembly, homotetramer. It depends on Mg(2+) as a cofactor.

The protein resides in the cytoplasm. The catalysed reaction is alpha-D-xylose = alpha-D-xylulofuranose. This is Xylose isomerase from Caldanaerobacter subterraneus subsp. yonseiensis (Thermoanaerobacter yonseiensis).